The primary structure comprises 293 residues: Putative F-box/kelch-repeat protein At4g34170 (293 aa).

The F-box domain maps to 9 to 55 (VKTMLMLHDDLILNCLARVSRSNHPTLSLVCKRFHSLLASVELYQTR). Kelch repeat units lie at residues 94–140 (NIDA…TLDG), 141–187 (KIYV…ESVR), and 226–272 (SYCV…LADY).

This Arabidopsis thaliana (Mouse-ear cress) protein is Putative F-box/kelch-repeat protein At4g34170.